The sequence spans 73 residues: MRTIISLLLLSAMVFAVIEAISLEEGLQLFEGERGCVGENQQCADWAGPHCCSGYYCTCRYFPKCICVNDNGK.

The first 20 residues, Met-1–Ala-20, serve as a signal peptide directing secretion. Positions Ile-21–Arg-34 are excised as a propeptide. Cystine bridges form between Cys-36-Cys-52, Cys-43-Cys-57, Cys-51-Cys-67, and Cys-59-Cys-65. At Asn-71 the chain carries Asparagine amide.

Belongs to the neurotoxin 07 (Beta/delta-agtx) family. 03 (aga-4) subfamily. Aga sub-subfamily. Expressed by the venom gland.

The protein localises to the secreted. Functionally, insecticidal neurotoxin that induces an irreversible spastic paralysis when injected into insects. Modifies presynaptic voltage-gated sodium channels (Nav), causing them to open at the normal resting potential of the nerve. This leads to spontaneous release of neurotransmitter and repetitive action potentials in motor neurons. The sequence is that of U3-agatoxin-Ao1e from Agelena orientalis (Funnel-web spider).